The primary structure comprises 278 residues: Probable ribosomal RNA small subunit methyltransferase A (278 aa).

S-adenosyl-L-methionine-binding residues include asparagine 23, leucine 25, glycine 50, glutamate 71, aspartate 95, and asparagine 110.

This sequence belongs to the class I-like SAM-binding methyltransferase superfamily. rRNA adenine N(6)-methyltransferase family. RsmA subfamily.

The protein localises to the cytoplasm. Its function is as follows. Specifically dimethylates two adjacent adenosines in the loop of a conserved hairpin near the 3'-end of 16S rRNA in the 30S particle. May play a critical role in biogenesis of 30S subunits. In Thermococcus gammatolerans (strain DSM 15229 / JCM 11827 / EJ3), this protein is Probable ribosomal RNA small subunit methyltransferase A.